Here is a 123-residue protein sequence, read N- to C-terminus: Snaclec echicetin subunit beta (123 aa).

One can recognise a C-type lectin domain in the interval 1-121; the sequence is NCLPDWSVYE…SGEFYFVCKC (121 aa). Disulfide bonds link cysteine 2–cysteine 13, cysteine 30–cysteine 119, and cysteine 96–cysteine 111.

It belongs to the snaclec family. As to quaternary structure, heterodimer of subunits alpha and beta; disulfide-linked. Forms an active complex with the pentameric immunoglobuline Mkappa (IgMkappa). Expressed by the venom gland.

Its subcellular location is the secreted. Functionally, echicetin itself inhibits aggregation of washed platelets induced by vWF, thrombin or alboaggregin-A. However, when complexed with the pentameric plasma immunoglobulin Mkappa (IgMkappa), echicetin binds specifically to GPIb and activates platelets. This is caused by P-selectin expression and activation of alpha-IIb/beta-3 as well as tyrosine phosphorylation of several signal transduction molecules, including p53/56(LYN), p64, p72(SYK), p70 to p90, and p120. In vivo, it induces thrombocytopenia when injected into mice, probably accounting of activation of platelets rather than inhibition. The polypeptide is Snaclec echicetin subunit beta (Echis carinatus sochureki (Saw-scaled viper)).